The following is a 128-amino-acid chain: Sulfurtransferase TusD (128 aa).

Catalysis depends on C78, which acts as the Cysteine persulfide intermediate.

This sequence belongs to the DsrE/TusD family. As to quaternary structure, heterohexamer, formed by a dimer of trimers. The hexameric TusBCD complex contains 2 copies each of TusB, TusC and TusD. The TusBCD complex interacts with TusE.

Its subcellular location is the cytoplasm. Functionally, part of a sulfur-relay system required for 2-thiolation of 5-methylaminomethyl-2-thiouridine (mnm(5)s(2)U) at tRNA wobble positions. Accepts sulfur from TusA and transfers it in turn to TusE. This chain is Sulfurtransferase TusD, found in Escherichia fergusonii (strain ATCC 35469 / DSM 13698 / CCUG 18766 / IAM 14443 / JCM 21226 / LMG 7866 / NBRC 102419 / NCTC 12128 / CDC 0568-73).